A 284-amino-acid chain; its full sequence is D-tagatose-1,6-bisphosphate aldolase subunit GatY (284 aa).

D82 serves as the catalytic Proton donor. Residues H83 and H180 each contribute to the Zn(2+) site. G181 contacts dihydroxyacetone phosphate. H208 provides a ligand contact to Zn(2+). Dihydroxyacetone phosphate is bound by residues 209–211 and 230–233; these read GAS and NVAT.

The protein belongs to the class II fructose-bisphosphate aldolase family. TagBP aldolase GatY subfamily. In terms of assembly, forms a complex with GatZ. It depends on Zn(2+) as a cofactor.

It carries out the reaction D-tagatofuranose 1,6-bisphosphate = D-glyceraldehyde 3-phosphate + dihydroxyacetone phosphate. The protein operates within carbohydrate metabolism; D-tagatose 6-phosphate degradation; D-glyceraldehyde 3-phosphate and glycerone phosphate from D-tagatose 6-phosphate: step 2/2. In terms of biological role, catalytic subunit of the tagatose-1,6-bisphosphate aldolase GatYZ, which catalyzes the reversible aldol condensation of dihydroxyacetone phosphate (DHAP or glycerone-phosphate) with glyceraldehyde 3-phosphate (G3P) to produce tagatose 1,6-bisphosphate (TBP). Requires GatZ subunit for full activity and stability. Is involved in the catabolism of galactitol. In Escherichia coli O157:H7, this protein is D-tagatose-1,6-bisphosphate aldolase subunit GatY.